Here is a 545-residue protein sequence, read N- to C-terminus: Adenine deaminase (545 aa).

The protein belongs to the metallo-dependent hydrolases superfamily. Adenine deaminase family. Mn(2+) is required as a cofactor.

The enzyme catalyses adenine + H2O + H(+) = hypoxanthine + NH4(+). This Parabacteroides distasonis (strain ATCC 8503 / DSM 20701 / CIP 104284 / JCM 5825 / NCTC 11152) protein is Adenine deaminase.